Reading from the N-terminus, the 251-residue chain is uncharacterized protein (251 aa).

Positions 207–251 are disordered; sequence ATPHSKRGRTKLYRKEPPGDNRSPPPWQEPHGEGLAEKLSPGPAR.

This is an uncharacterized protein from Treponema pallidum (strain Nichols).